The chain runs to 317 residues: uncharacterized protein (317 aa).

At 1–13 (MKRVTGVFLTLLR) the chain is on the cytoplasmic side. A helical membrane pass occupies residues 14-34 (FSQFASSVLVMSLLAYAIHAY). Topologically, residues 35-49 (GNRGNKKTNFTLATG) are extracellular. The N-linked (GlcNAc...) asparagine glycan is linked to Asn-43. Residues 50 to 70 (VISVFYLIALGILCLALPTLI) traverse the membrane as a helical segment. Position 71 (Tyr-71) is a topological domain, cytoplasmic. A helical transmembrane segment spans residues 72-92 (IGMYFCAELIVCMLWLAAFVV). Over 93 to 133 (LAKAQGERSCSNTNADGLYYNPYSGQYTADSHRRACNSSQA) the chain is Extracellular. N-linked (GlcNAc...) asparagine glycosylation occurs at Asn-129. Residues 134–154 (AIAFSGLCFVLFLISVILLGI) traverse the membrane as a helical segment. Residues 155-317 (NVLTPIRKRY…EPNRNVNQMP (163 aa)) lie on the Cytoplasmic side of the membrane. A disordered region spans residues 204 to 317 (RTGDVEAGAG…EPNRNVNQMP (114 aa)). Residues 239–250 (TTTTNTRYTTTT) are compositionally biased toward low complexity. Over residues 256–282 (RYTTNDRNPGSANVANSAVDQHAYSTD) the composition is skewed to polar residues. Residues 284–295 (SGDRSYQEKVTE) show a composition bias toward basic and acidic residues. The segment covering 302-317 (MSGSTAEPNRNVNQMP) has biased composition (polar residues).

It is found in the membrane. This is an uncharacterized protein from Saccharomyces cerevisiae (strain ATCC 204508 / S288c) (Baker's yeast).